A 511-amino-acid polypeptide reads, in one-letter code: Phosphoenolpyruvate carboxylase (511 aa).

It belongs to the PEPCase type 2 family. As to quaternary structure, homotetramer. The cofactor is Mg(2+).

The catalysed reaction is oxaloacetate + phosphate = phosphoenolpyruvate + hydrogencarbonate. Functionally, catalyzes the irreversible beta-carboxylation of phosphoenolpyruvate (PEP) to form oxaloacetate (OAA), a four-carbon dicarboxylic acid source for the tricarboxylic acid cycle. The polypeptide is Phosphoenolpyruvate carboxylase (Saccharolobus islandicus (strain L.S.2.15 / Lassen #1) (Sulfolobus islandicus)).